Consider the following 449-residue polypeptide: HSPB1-associated protein 1 homolog (449 aa).

Residues 102 to 266 (WAYADYKYIA…DEARVAEALT (165 aa)) enclose the JmjC domain. Residues 385–395 (DQDKLRSDNKL) show a composition bias toward basic and acidic residues. A disordered region spans residues 385-416 (DQDKLRSDNKLGQRSGQSVLQDTENPGGSGEM). Residues 396-410 (GQRSGQSVLQDTENP) are compositionally biased toward polar residues.

The protein resides in the cytoplasm. Functionally, may play a role in cellular stress response. The polypeptide is HSPB1-associated protein 1 homolog (hspbap1) (Danio rerio (Zebrafish)).